The chain runs to 109 residues: Thiosulfate sulfurtransferase GlpE (109 aa).

The Rhodanese domain occupies 16–104 (RNAGAVIVDI…WRHTYPSDVE (89 aa)). C64 serves as the catalytic Cysteine persulfide intermediate.

The protein belongs to the GlpE family.

The protein resides in the cytoplasm. It carries out the reaction thiosulfate + hydrogen cyanide = thiocyanate + sulfite + 2 H(+). It catalyses the reaction thiosulfate + [thioredoxin]-dithiol = [thioredoxin]-disulfide + hydrogen sulfide + sulfite + 2 H(+). Its function is as follows. Transferase that catalyzes the transfer of sulfur from thiosulfate to thiophilic acceptors such as cyanide or dithiols. May function in a CysM-independent thiosulfate assimilation pathway by catalyzing the conversion of thiosulfate to sulfite, which can then be used for L-cysteine biosynthesis. The sequence is that of Thiosulfate sulfurtransferase GlpE from Stutzerimonas stutzeri (strain A1501) (Pseudomonas stutzeri).